A 768-amino-acid chain; its full sequence is MRTVFSQIPRFKQVNQYIRMSTRQSDISNFFISSASHKSEHVEVSQSSSDSKNVDGRSTSEKRKVESVKLVDESKHNNHDDTGTQNVERENNIVSEAKKQKTLGSSSSSSDAVSSNNDSGASTPIPLPIKEPPLESNARNDKLKGHATFAEMVKAFTKIENTSKRLEIIDIMGTYFFGILRDHPSDLLACVYLSINKLGPDYSGLELGIGESIIMKAIGESTGQTLQQIKLSFHKVGDLGLVAQTSRQNQPTMFKPAALTIPFLFDSLKKIAQMSGNQSQNRKIGVIKRLLSSCEGAEPKYLIRALEGKLRLQLAEKTILVALANATAQYHADKNGEKLSQQDRIEGEQILRDVYCQLPSYDLIVPHLIEHGLGTLRETCKLTPGIPTKPMLAKPTKQISEVLNTFDQAAFTCEYKYDGERAQVHFTEDGKFYVFSRNSENMSVRYPDISVSVSKWKKPDARSFILDCEAVGWDRDENKILPFQKLATRKRKDVKIGDIKVRACLFAFDILYLNGQPLLETPLNERRKLLYSMFQPSTGDFTFAKHSDQKSIESIEEFLEESVKDSCEGLMVKMLEGPDSHYEPSKRSRHWLKVKKDYLSGVGDSLDLIVIGAYYGKGKRTSVYGAFLLGCYDPDTETVQSICKLGTGFSEEHLETFYNQLKDIVISKKKDFYAHSDVPAHQPDVWFEPKYLWEVLAADLSLSPVYKAAIGYVQEDKGISLRFPRFIRIREDKSWEDATTSEQVSEFYRSQVAYSQKEKEGSPAAEDY.

A disordered region spans residues 42-139 (VEVSQSSSDS…KEPPLESNAR (98 aa)). Over residues 52–99 (KNVDGRSTSEKRKVESVKLVDESKHNNHDDTGTQNVERENNIVSEAKK) the composition is skewed to basic and acidic residues. Residues 104–124 (GSSSSSSDAVSSNNDSGASTP) show a composition bias toward low complexity. The interaction with target DNA stretch occupies residues 309-318 (KLRLQLAEKT). Glu-414 provides a ligand contact to ATP. The N6-AMP-lysine intermediate role is filled by Lys-416. Residues Arg-421 and Arg-437 each contribute to the ATP site. Glu-469 provides a ligand contact to Mg(2+). The interval 490-492 (KRK) is interaction with target DNA. Residue Glu-568 participates in Mg(2+) binding. Residues Lys-573, Arg-587, and Lys-593 each contribute to the ATP site.

The protein belongs to the ATP-dependent DNA ligase family. Mg(2+) is required as a cofactor.

It is found in the nucleus. The catalysed reaction is ATP + (deoxyribonucleotide)n-3'-hydroxyl + 5'-phospho-(deoxyribonucleotide)m = (deoxyribonucleotide)n+m + AMP + diphosphate.. DNA ligase that seals nicks in double-stranded DNA during DNA replication, DNA recombination and DNA repair. In Schizosaccharomyces pombe (strain 972 / ATCC 24843) (Fission yeast), this protein is DNA ligase 1 (cdc17).